The sequence spans 621 residues: MESSPESLQPLEHGVAAGPASGTGSSQEGLQETRLAAGDGPGVWAAETSGGNGLGAAAARRSLPDSASPAGSPEVPGPCSSSAGLDLKDSGLESPAAAEAPLRGQYKVTASPETAVAGVGHELGTAGDAGARPDLAGTCQAELTAAGSEEPSSAGGLSSSCSDPSPPGESPSLDSLESFSNLHSFPSSCEFNSEEGAENRVPEEEEGAAVLPGAVPLCKEEEGEETAQVLAASKERFPGQSVYHIKWIQWKEENTPIITQNENGPCPLLAILNVLLLAWKVKLPPMMEIITAEQLMEYLGDYMLDAKPKEISEIQRLNYEQNMSDAMAILHKLQTGLDVNVRFTGVRVFEYTPECIVFDLLDIPLYHGWLVDPQIDDIVKAVGNCSYNQLVEKIISCKQSDNSELVSEGFVAEQFLNNTATQLTYHGLCELTSTVQEGELCVFFRNNHFSTMTKYKGQLYLLVTDQGFLTEEKVVWESLHNVDGDGNFCDSEFHLRPPSDPETVYKGQQDQIDQDYLMALSLQQEQQSQEINWEQIPEGISDLELAKKLQEEEDRRASQYYQEQEQAAAAAAAASTQAQQGQPAQASPSSGRQSGNSERKRKEPREKDKEKEKEKNSCVIL.

Disordered regions lie at residues 1–106 and 119–179; these read MESS…RGQY and VGHE…LESF. Residue S94 is modified to Phosphoserine. Residues 145–163 show a composition bias toward low complexity; sequence AAGSEEPSSAGGLSSSCSD. C266 (nucleophile) is an active-site residue. Residue H448 is the Proton acceptor of the active site. The tract at residues 507–559 is ubiquitin-binding domain (UBD); it reads GQQDQIDQDYLMALSLQQEQQSQEINWEQIPEGISDLELAKKLQEEEDRRASQ. Positions 556–621 are disordered; it reads RASQYYQEQE…EKEKNSCVIL (66 aa). The span at 558–591 shows a compositional bias: low complexity; sequence SQYYQEQEQAAAAAAAASTQAQQGQPAQASPSSG. Residues 597 to 621 are compositionally biased toward basic and acidic residues; it reads SERKRKEPREKDKEKEKEKNSCVIL.

It belongs to the MINDY deubiquitinase family. FAM63 subfamily.

The enzyme catalyses Thiol-dependent hydrolysis of ester, thioester, amide, peptide and isopeptide bonds formed by the C-terminal Gly of ubiquitin (a 76-residue protein attached to proteins as an intracellular targeting signal).. Hydrolase that can remove 'Lys-48'-linked conjugated ubiquitin from proteins. Binds to polyubiquitin chains of different linkage types, including 'Lys-6', 'Lys-11', 'Lys-29', 'Lys-33', 'Lys-48' and 'Lys-63'. May play a regulatory role at the level of protein turnover. The protein is Ubiquitin carboxyl-terminal hydrolase MINDY-2 of Homo sapiens (Human).